The following is a 494-amino-acid chain: UDP-N-acetylmuramoyl-L-alanyl-D-glutamate--L-lysine ligase (494 aa).

UDP-N-acetyl-alpha-D-muramoyl-L-alanyl-D-glutamate is bound at residue Ser-30. An ATP-binding site is contributed by 110–116; it reads GTNGKTS. UDP-N-acetyl-alpha-D-muramoyl-L-alanyl-D-glutamate-binding positions include 152–153, Ser-179, and Arg-187; that span reads TT. The residue at position 219 (Lys-219) is an N6-carboxylysine. Positions 406–409 match the L-lysine recognition motif motif; sequence DNPA.

The protein belongs to the MurCDEF family. MurE subfamily. Post-translationally, carboxylation is probably crucial for Mg(2+) binding and, consequently, for the gamma-phosphate positioning of ATP.

It localises to the cytoplasm. The enzyme catalyses UDP-N-acetyl-alpha-D-muramoyl-L-alanyl-D-glutamate + L-lysine + ATP = UDP-N-acetyl-alpha-D-muramoyl-L-alanyl-gamma-D-glutamyl-L-lysine + ADP + phosphate + H(+). It participates in cell wall biogenesis; peptidoglycan biosynthesis. Functionally, catalyzes the addition of L-lysine to the nucleotide precursor UDP-N-acetylmuramoyl-L-alanyl-D-glutamate (UMAG) in the biosynthesis of bacterial cell-wall peptidoglycan. The polypeptide is UDP-N-acetylmuramoyl-L-alanyl-D-glutamate--L-lysine ligase (Staphylococcus epidermidis (strain ATCC 35984 / DSM 28319 / BCRC 17069 / CCUG 31568 / BM 3577 / RP62A)).